Here is a 228-residue protein sequence, read N- to C-terminus: Ribosomal RNA small subunit methyltransferase G (228 aa).

Residues glycine 70, leucine 75, 120-121 (AE), and arginine 138 each bind S-adenosyl-L-methionine. The tract at residues 207–228 (RRGDTRGPNRRVSPRRTGGAPA) is disordered.

The protein belongs to the methyltransferase superfamily. RNA methyltransferase RsmG family.

Its subcellular location is the cytoplasm. In terms of biological role, specifically methylates the N7 position of guanine in position 518 of 16S rRNA. This chain is Ribosomal RNA small subunit methyltransferase G, found in Mycobacterium marinum (strain ATCC BAA-535 / M).